The chain runs to 105 residues: Insulin (105 aa).

An N-terminal signal peptide occupies residues 1-22 (MAFWLQAASLLVLLALSPGVDA). Cystine bridges form between cysteine 29-cysteine 91, cysteine 41-cysteine 104, and cysteine 90-cysteine 95. The propeptide at 53–82 (DVDPLIGFLSPKSAKENEEYPFKDQTEMMV) is c peptide.

It belongs to the insulin family. Heterodimer of a B chain and an A chain linked by two disulfide bonds.

It localises to the secreted. Functionally, insulin decreases blood glucose concentration. It increases cell permeability to monosaccharides, amino acids and fatty acids. It accelerates glycolysis, the pentose phosphate cycle, and glycogen synthesis in liver. The protein is Insulin (ins) of Oncorhynchus keta (Chum salmon).